A 261-amino-acid chain; its full sequence is 3-hydroxyacyl-CoA dehydrogenase type-2 (261 aa).

N-acetylalanine is present on Ala2. NAD(+) contacts are provided by Ser20, Leu22, and Asp41. Lys53 bears the N6-acetyllysine; alternate mark. N6-succinyllysine; alternate is present on Lys53. Val65 contacts NAD(+). Residue Lys69 is modified to N6-acetyllysine. Cys91 lines the NAD(+) pocket. Residues Lys99 and Lys105 each carry the N6-acetyllysine modification. Ser155 serves as a coordination point for substrate. The NAD(+) site is built by Tyr168, Lys172, Phe201, and Thr203. The Proton acceptor role is filled by Tyr168. N6-acetyllysine; alternate is present on Lys212. Lys212 is modified (N6-succinyllysine; alternate).

The protein belongs to the short-chain dehydrogenases/reductases (SDR) family. As to quaternary structure, homotetramer. Component of mitochondrial ribonuclease P, a complex composed of TRMT10C/MRPP1, HSD17B10/MRPP2 and PRORP/MRPP3. Interacts with TRMT10C/MRPP1; forming the MRPP1-MRPP2 subcomplex of the mitochondrial ribonuclease P complex.

Its subcellular location is the mitochondrion. It is found in the mitochondrion matrix. It localises to the mitochondrion nucleoid. It carries out the reaction a (3S)-3-hydroxyacyl-CoA + NAD(+) = a 3-oxoacyl-CoA + NADH + H(+). The enzyme catalyses (2S,3S)-3-hydroxy-2-methylbutanoyl-CoA + NAD(+) = 2-methyl-3-oxobutanoyl-CoA + NADH + H(+). The catalysed reaction is testosterone + NAD(+) = androst-4-ene-3,17-dione + NADH + H(+). It catalyses the reaction 5alpha-androstane-3alpha,17beta-diol + NAD(+) = 17beta-hydroxy-5alpha-androstan-3-one + NADH + H(+). It carries out the reaction 17beta-estradiol + NAD(+) = estrone + NADH + H(+). The enzyme catalyses cholate + NAD(+) = 3alpha,12alpha-dihydroxy-7-oxo-5beta-cholanate + NADH + H(+). The catalysed reaction is (3S)-3-hydroxybutanoyl-CoA + NAD(+) = acetoacetyl-CoA + NADH + H(+). It catalyses the reaction (3S)-hydroxyoctanoyl-CoA + NAD(+) = 3-oxooctanoyl-CoA + NADH + H(+). It carries out the reaction (3S)-hydroxyhexadecanoyl-CoA + NAD(+) = 3-oxohexadecanoyl-CoA + NADH + H(+). The enzyme catalyses 17beta-hydroxy-5alpha-androstan-3-one + NAD(+) = 5alpha-androstan-3,17-dione + NADH + H(+). The catalysed reaction is 5alpha-pregnan-20beta-ol-3-one + NAD(+) = 5alpha-pregnane-3,20-dione + NADH + H(+). It catalyses the reaction 3alpha-hydroxy-5alpha-pregnan-20-one + NAD(+) = 5alpha-pregnane-3,20-dione + NADH + H(+). It carries out the reaction cortisone + NAD(+) = 17alpha-hydroxypregn-4-en-3,11,20-trione-21-al + NADH + H(+). The enzyme catalyses 11-dehydrocorticosterone + NAD(+) = pregn-4-ene-3,11,20,21-tetraone + NADH + H(+). The catalysed reaction is cortisol + NAD(+) = 11beta,17alpha-dihydroxypregn-4-ene-3,20,21-trione + NADH + H(+). It catalyses the reaction chenodeoxycholate + NAD(+) = 7-oxolithocholate + NADH + H(+). It carries out the reaction ursodeoxycholate + NAD(+) = 7-oxolithocholate + NADH + H(+). The enzyme catalyses 3beta,7beta-dihydroxy-5beta-cholan-24-oate + NAD(+) = 3beta-hydroxy-7-oxo-5beta-cholan-24-oate + NADH + H(+). The protein operates within amino-acid degradation; L-isoleucine degradation. It participates in lipid metabolism; fatty acid beta-oxidation. It functions in the pathway steroid metabolism. Its pathway is lipid metabolism; bile acid biosynthesis. Its function is as follows. Mitochondrial dehydrogenase involved in pathways of fatty acid, branched-chain amino acid and steroid metabolism. Acts as (S)-3-hydroxyacyl-CoA dehydrogenase in mitochondrial fatty acid beta-oxidation, a major degradation pathway of fatty acids. Catalyzes the third step in the beta-oxidation cycle, namely the reversible conversion of (S)-3-hydroxyacyl-CoA to 3-ketoacyl-CoA. Preferentially accepts straight medium- and short-chain acyl-CoA substrates with highest efficiency for (3S)-hydroxybutanoyl-CoA. Acts as 3-hydroxy-2-methylbutyryl-CoA dehydrogenase in branched-chain amino acid catabolic pathway. Catalyzes the oxidation of 3-hydroxy-2-methylbutanoyl-CoA into 2-methyl-3-oxobutanoyl-CoA, a step in isoleucine degradation pathway. Has hydroxysteroid dehydrogenase activity toward steroid hormones and bile acids. Catalyzes the oxidation of 3alpha-, 17beta-, 20beta- and 21-hydroxysteroids and 7alpha- and 7beta-hydroxy bile acids. Oxidizes allopregnanolone/brexanolone at the 3alpha-hydroxyl group, which is known to be critical for the activation of gamma-aminobutyric acid receptors (GABAARs) chloride channel. Has phospholipase C-like activity toward cardiolipin and its oxidized species. Likely oxidizes the 2'-hydroxyl in the head group of cardiolipin to form a ketone intermediate that undergoes nucleophilic attack by water and fragments into diacylglycerol, dihydroxyacetone and orthophosphate. Has higher affinity for cardiolipin with oxidized fatty acids and may degrade these species during the oxidative stress response to protect cells from apoptosis. By interacting with intracellular amyloid-beta, it may contribute to the neuronal dysfunction associated with Alzheimer disease (AD). Essential for structural and functional integrity of mitochondria. In terms of biological role, in addition to mitochondrial dehydrogenase activity, moonlights as a component of mitochondrial ribonuclease P, a complex that cleaves tRNA molecules in their 5'-ends. Together with TRMT10C/MRPP1, forms a subcomplex of the mitochondrial ribonuclease P, named MRPP1-MRPP2 subcomplex, which displays functions that are independent of the ribonuclease P activity. The MRPP1-MRPP2 subcomplex catalyzes the formation of N(1)-methylguanine and N(1)-methyladenine at position 9 (m1G9 and m1A9, respectively) in tRNAs; HSD17B10/MRPP2 acting as a non-catalytic subunit. The MRPP1-MRPP2 subcomplex also acts as a tRNA maturation platform: following 5'-end cleavage by the mitochondrial ribonuclease P complex, the MRPP1-MRPP2 subcomplex enhances the efficiency of 3'-processing catalyzed by ELAC2, retains the tRNA product after ELAC2 processing and presents the nascent tRNA to the mitochondrial CCA tRNA nucleotidyltransferase TRNT1 enzyme. Associates with mitochondrial DNA complexes at the nucleoids to initiate RNA processing and ribosome assembly. The sequence is that of 3-hydroxyacyl-CoA dehydrogenase type-2 (Hsd17b10) from Rattus norvegicus (Rat).